The primary structure comprises 344 residues: Lipase chaperone (344 aa).

Residues 14-34 traverse the membrane as a helical segment; it reads AVVYGAVGLAAIAGVAMWSGA. Residues 37 to 78 form a disordered region; it reads HGGTGASGEPPDASAARGPAAAPPQAAVPASTSLPPSLAGSS. Residues 43 to 78 show a composition bias toward low complexity; sequence SGEPPDASAARGPAAAPPQAAVPASTSLPPSLAGSS.

The protein belongs to the lipase chaperone family.

It localises to the cell inner membrane. In terms of biological role, may be involved in the folding of the extracellular lipase during its passage through the periplasm. The protein is Lipase chaperone (lifO) of Burkholderia cepacia (Pseudomonas cepacia).